The following is a 376-amino-acid chain: Zinc finger CCCH domain-containing protein C337.12 (376 aa).

The stretch at 2–25 (NEQQLLENIASLAGAINQYKNEKE) forms a coiled coil. Positions 60-95 (SKSTAASPPYVIPSTSSNADDANKEPEKQSTSDYVS) are disordered. A compositionally biased stretch (basic and acidic residues) spans 80-89 (DANKEPEKQS). The stretch at 105-140 (KKNILEHDLQARKANLESYRAKLEKEYKTLAENKIQ) forms a coiled coil. 4 consecutive C3H1-type zinc fingers follow at residues 202-228 (SPSA…FVHE), 229-256 (PTRK…HELD), 257-283 (PRRI…HIHY), and 284-312 (SENA…HILQ). Residues 347 to 376 (SKTAGSINPEDSGSEIGSNSLESNLDFISV) are disordered. A compositionally biased stretch (polar residues) spans 349–369 (TAGSINPEDSGSEIGSNSLES).

Its subcellular location is the nucleus. In Schizosaccharomyces pombe (strain 972 / ATCC 24843) (Fission yeast), this protein is Zinc finger CCCH domain-containing protein C337.12.